Here is a 549-residue protein sequence, read N- to C-terminus: Probable chaperonin-like protein PrmG (549 aa).

This sequence belongs to the chaperonin (HSP60) family.

Functionally, probably plays an essential role in the productive folding of PrmA, and thus in the formation of the active PrmABCD complex. This chain is Probable chaperonin-like protein PrmG (prmG), found in Rhodococcus jostii (strain RHA1).